Reading from the N-terminus, the 409-residue chain is Tryptophan synthase beta chain (409 aa).

Lys98 carries the post-translational modification N6-(pyridoxal phosphate)lysine.

Belongs to the TrpB family. As to quaternary structure, tetramer of two alpha and two beta chains. Pyridoxal 5'-phosphate serves as cofactor.

The catalysed reaction is (1S,2R)-1-C-(indol-3-yl)glycerol 3-phosphate + L-serine = D-glyceraldehyde 3-phosphate + L-tryptophan + H2O. It participates in amino-acid biosynthesis; L-tryptophan biosynthesis; L-tryptophan from chorismate: step 5/5. The beta subunit is responsible for the synthesis of L-tryptophan from indole and L-serine. The protein is Tryptophan synthase beta chain of Jannaschia sp. (strain CCS1).